Consider the following 354-residue polypeptide: Guanine nucleotide-binding protein alpha-3 subunit (354 aa).

Gly2 carries N-myristoyl glycine lipidation. Residue Cys4 is the site of S-palmitoyl cysteine attachment. One can recognise a G-alpha domain in the interval Lys33–Leu354. Positions Lys36–Thr49 are G1 motif. Residues Gly41–Ser48, Leu177–Thr183, Asp202–Gln206, Asn271–Asp274, and Ala326 contribute to the GTP site. Residues Ser48 and Thr183 each contribute to the Mg(2+) site. Positions Asp175–Thr183 are G2 motif. The interval Ile198–Arg207 is G3 motif. Residues Ile267–Asp274 form a G4 motif region. Positions Thr324 to Thr329 are G5 motif.

This sequence belongs to the G-alpha family. In terms of assembly, g proteins are composed of 3 units; alpha, beta and gamma. The alpha chain contains the guanine nucleotide binding site.

In terms of biological role, guanine nucleotide-binding proteins (G proteins) are involved as modulators or transducers in various transmembrane signaling systems. This subunit is involved in cAMP regulation and morphogenesis. It is essential for dimorphic switching in haploid cells. This chain is Guanine nucleotide-binding protein alpha-3 subunit (FIL1), found in Ustilago hordei (Barley covered smut fungus).